A 329-amino-acid polypeptide reads, in one-letter code: Biotin synthase (329 aa).

Residues 36 to 260 enclose the Radical SAM core domain; it reads GEIQLCTLLS…VAVARITMPK (225 aa). [4Fe-4S] cluster contacts are provided by Cys51, Cys55, and Cys58. [2Fe-2S] cluster contacts are provided by Cys95, Cys126, Cys186, and Arg264.

The protein belongs to the radical SAM superfamily. Biotin synthase family. Homodimer. [4Fe-4S] cluster is required as a cofactor. Requires [2Fe-2S] cluster as cofactor.

It catalyses the reaction (4R,5S)-dethiobiotin + (sulfur carrier)-SH + 2 reduced [2Fe-2S]-[ferredoxin] + 2 S-adenosyl-L-methionine = (sulfur carrier)-H + biotin + 2 5'-deoxyadenosine + 2 L-methionine + 2 oxidized [2Fe-2S]-[ferredoxin]. Its pathway is cofactor biosynthesis; biotin biosynthesis; biotin from 7,8-diaminononanoate: step 2/2. Its function is as follows. Catalyzes the conversion of dethiobiotin (DTB) to biotin by the insertion of a sulfur atom into dethiobiotin via a radical-based mechanism. This chain is Biotin synthase, found in Sphingopyxis alaskensis (strain DSM 13593 / LMG 18877 / RB2256) (Sphingomonas alaskensis).